Consider the following 918-residue polypeptide: Melanoma-associated antigen E1 (918 aa).

Disordered regions lie at residues 1–140 (MSLV…GSKA), 154–227 (EQRH…SNGL), and 367–388 (SQMSLAAEGPSASGMPTEANNP). Positions 8-23 (SRRRRGGRANARRNNG) are enriched in basic residues. 3 stretches are compositionally biased toward polar residues: residues 70-96 (VPPTASEGSSAPRQFIISQGPNTSEMP), 113-126 (GLNTAMSITASEGP), and 213-227 (EDPSTSVPPTDSNGL). MAGE domains are found at residues 459–658 (MEQN…YNEA) and 706–897 (LESK…YREA). Residues 704–918 (SRLESKARKL…RRPLIVRNLR (215 aa)) are interaction with DTNA.

As to quaternary structure, interacts with DTNA. Interacts with TRIM28. Expressed in cell bodies and dendrites of hippocampal and Purkinje neurons. Also expressed in peripheral nerve, where it localizes to the perineurium and myelin (at protein level). Predominantly expressed in brain and at low levels in the heart, liver, kidney, spleen, testis, lung, thymus, placenta and skeletal muscle.

It is found in the cytoplasm. Its subcellular location is the perinuclear region. It localises to the nucleus. The protein resides in the cell membrane. Functionally, may enhance ubiquitin ligase activity of RING-type zinc finger-containing E3 ubiquitin-protein ligases. Proposed to act through recruitment and/or stabilization of the Ubl-conjugating enzyme (E2) at the E3:substrate complex. The chain is Melanoma-associated antigen E1 (Magee1) from Mus musculus (Mouse).